A 410-amino-acid chain; its full sequence is Dipeptidase 1 (410 aa).

The signal sequence occupies residues 1–16; it reads MVIIWWFWSLLAICAS. Residues His36 and Asp38 each contribute to the Zn(2+) site. A disulfide bridge connects residues Cys87 and Cys170. A glycan (N-linked (GlcNAc...) asparagine) is linked at Asn121. Glu141 is a binding site for Zn(2+). His168 contributes to the substrate binding site. 2 residues coordinate Zn(2+): His214 and His235. An intrachain disulfide couples Cys242 to Cys274. Arg246 serves as a coordination point for substrate. Asn258 is a glycosylation site (N-linked (GlcNAc...) asparagine). Position 304 (Asp304) interacts with substrate. A glycan (N-linked (GlcNAc...) asparagine) is linked at Asn332. A lipid anchor (GPI-anchor amidated serine) is attached at Ser384. Residues 385–410 constitute a propeptide, removed in mature form; that stretch reads QAHSIHLQTGALVASLASLLFRLHLL.

Belongs to the metallo-dependent hydrolases superfamily. Peptidase M19 family. In terms of assembly, homodimer; disulfide-linked. Zn(2+) serves as cofactor. As to expression, expressed in heart, lung, skeletal muscle, kidney, liver, and testis. Not detected in brain and spleen.

It is found in the apical cell membrane. The protein resides in the cell projection. Its subcellular location is the microvillus membrane. It catalyses the reaction an L-aminoacyl-L-amino acid + H2O = 2 an L-alpha-amino acid. The catalysed reaction is leukotriene D4 + H2O = leukotriene E4 + glycine. The enzyme catalyses L-cystine-bis-glycine + 2 H2O = L-cystine + 2 glycine. It carries out the reaction a beta-lactam + H2O = a substituted beta-amino acid. It catalyses the reaction glycyldehydrophenylalanine + H2O = 2,3-didehydrophenylalanine + glycine. With respect to regulation, inhibited by L-penicillamine. Inhibited by cilastatin. Functionally, hydrolyzes a wide range of dipeptides including the conversion of leukotriene D4 to leukotriene E4. Hydrolyzes cystinyl-bis-glycine (cys-bis-gly) formed during glutathione degradation. Also possesses beta lactamase activity and hydrolytically inactivates beta-lactam antibiotics. In terms of biological role, independently of its dipeptidase activity, acts as an adhesion receptor for neutrophil recruitment from bloodstream into inflamed lungs and liver. This is Dipeptidase 1 (Dpep1) from Mus musculus (Mouse).